A 95-amino-acid polypeptide reads, in one-letter code: Large ribosomal subunit protein bL25 (95 aa).

Belongs to the bacterial ribosomal protein bL25 family. Part of the 50S ribosomal subunit; part of the 5S rRNA/L5/L18/L25 subcomplex. Contacts the 5S rRNA. Binds to the 5S rRNA independently of L5 and L18.

Functionally, this is one of the proteins that binds to the 5S RNA in the ribosome where it forms part of the central protuberance. This Shewanella woodyi (strain ATCC 51908 / MS32) protein is Large ribosomal subunit protein bL25.